The primary structure comprises 145 residues: 3-dehydroquinate dehydratase (145 aa).

Tyrosine 22 serves as the catalytic Proton acceptor. 3 residues coordinate substrate: asparagine 71, histidine 77, and aspartate 84. Histidine 97 serves as the catalytic Proton donor. Substrate is bound by residues 98–99 and arginine 108; that span reads LS.

The protein belongs to the type-II 3-dehydroquinase family. As to quaternary structure, homododecamer.

The enzyme catalyses 3-dehydroquinate = 3-dehydroshikimate + H2O. The protein operates within metabolic intermediate biosynthesis; chorismate biosynthesis; chorismate from D-erythrose 4-phosphate and phosphoenolpyruvate: step 3/7. Functionally, catalyzes a trans-dehydration via an enolate intermediate. This Francisella tularensis subsp. tularensis (strain WY96-3418) protein is 3-dehydroquinate dehydratase.